The chain runs to 542 residues: DM7 family protein CG15333 (542 aa).

The protein belongs to the DM7 family.

The protein is DM7 family protein CG15333 of Drosophila melanogaster (Fruit fly).